The chain runs to 294 residues: Bifunctional protein FolD (294 aa).

Residues 166–168 (GRS), Ser-191, and Ile-232 each bind NADP(+).

It belongs to the tetrahydrofolate dehydrogenase/cyclohydrolase family. As to quaternary structure, homodimer.

It catalyses the reaction (6R)-5,10-methylene-5,6,7,8-tetrahydrofolate + NADP(+) = (6R)-5,10-methenyltetrahydrofolate + NADPH. The enzyme catalyses (6R)-5,10-methenyltetrahydrofolate + H2O = (6R)-10-formyltetrahydrofolate + H(+). It functions in the pathway one-carbon metabolism; tetrahydrofolate interconversion. Functionally, catalyzes the oxidation of 5,10-methylenetetrahydrofolate to 5,10-methenyltetrahydrofolate and then the hydrolysis of 5,10-methenyltetrahydrofolate to 10-formyltetrahydrofolate. The sequence is that of Bifunctional protein FolD from Bradyrhizobium diazoefficiens (strain JCM 10833 / BCRC 13528 / IAM 13628 / NBRC 14792 / USDA 110).